The sequence spans 616 residues: Chaperone protein HscA (616 aa).

It belongs to the heat shock protein 70 family.

Functionally, chaperone involved in the maturation of iron-sulfur cluster-containing proteins. Has a low intrinsic ATPase activity which is markedly stimulated by HscB. Involved in the maturation of IscU. This Yersinia enterocolitica serotype O:8 / biotype 1B (strain NCTC 13174 / 8081) protein is Chaperone protein HscA.